We begin with the raw amino-acid sequence, 259 residues long: Flagellar L-ring protein (259 aa).

An N-terminal signal peptide occupies residues 1–15 (MKRISLIALVTIMSG). Residue cysteine 16 is the site of N-palmitoyl cysteine attachment. Cysteine 16 carries S-diacylglycerol cysteine lipidation.

This sequence belongs to the FlgH family. The basal body constitutes a major portion of the flagellar organelle and consists of four rings (L,P,S, and M) mounted on a central rod.

The protein resides in the cell outer membrane. The protein localises to the bacterial flagellum basal body. In terms of biological role, assembles around the rod to form the L-ring and probably protects the motor/basal body from shearing forces during rotation. The chain is Flagellar L-ring protein from Vibrio vulnificus (strain CMCP6).